The chain runs to 384 residues: Glycerol 3-phosphate oxidase (384 aa).

The signal sequence occupies residues 1-17; sequence MQTIDVLIVGGGVIGTS. Isoleucine 14 contributes to the FAD binding site. A lipid anchor (N-palmitoyl cysteine) is attached at cysteine 18. Cysteine 18 carries the S-diacylglycerol cysteine lipid modification. FAD contacts are provided by residues glutamate 33, 42–43, and 47–49; these read TS and SGV. Residues serine 47 and histidine 51 each coordinate sn-glycerol 3-phosphate. Histidine 51 (proton acceptor) is an active-site residue. Valine 177 provides a ligand contact to FAD. Residues lysine 258 and arginine 320 each coordinate sn-glycerol 3-phosphate. Residue 346 to 347 participates in FAD binding; that stretch reads MK. Sn-glycerol 3-phosphate is bound at residue serine 348. FAD is bound at residue threonine 352.

In terms of assembly, monomer. FAD serves as cofactor.

The protein resides in the cytoplasm. The protein localises to the cell membrane. It catalyses the reaction sn-glycerol 3-phosphate + O2 = dihydroxyacetone phosphate + H2O2. Its pathway is polyol metabolism; glycerol degradation via glycerol kinase pathway; glycerone phosphate from sn-glycerol 3-phosphate (aerobic route): step 1/1. Functionally, catalyzes the oxidation of glycerol 3-phosphate to dihydroxyacetone phosphate (DHAP), with a reduction of O2 to H2O2. The formation of hydrogen peroxide by this enzyme is crucial for cytotoxic effects on host cells. Does not show any dehydrogenase activity with NAD(+). In Mycoplasma genitalium (strain ATCC 33530 / DSM 19775 / NCTC 10195 / G37) (Mycoplasmoides genitalium), this protein is Glycerol 3-phosphate oxidase.